A 404-amino-acid chain; its full sequence is MKLPIYLDYSATCPVDPRVAEKMVQYMTMDGTFGNPASRSHRYGWQAEEAVDTAREQIAELLNADPREIVFTSGATESDNLAIKGAAHFYSKQGKHVITSKTEHKAVLDTCRQLEREGFEVTYLEPESNGLISLSKLEAAMRDDTVLVSIMHVNNEIGVIQDIEAIGELCRSRKIIFHVDAAQSAGKVAIDVQKLKVDLISLSAHKIYGPKGIGALYVRRKPRIRLEAQMHGGGHERGFRSGTLPTHQIVGMGEAFRIAKLDMEKDYQHALALRNRLLDGVKDMEAVTINGDLDQRVPHNLNISFAFVEGESLLMSLKDLAVSSGSACTSASLEPSYVLRALGLNDELAHSSIRFSFGRFTTEEEIDYAIEQIRVAVEKLRDMSPLWDMYKDGIDLNTVEWAHH.

Residues 75-76 (AT), Asn155, Gln183, and 203-205 (SAH) each bind pyridoxal 5'-phosphate. An N6-(pyridoxal phosphate)lysine modification is found at Lys206. Thr243 contributes to the pyridoxal 5'-phosphate binding site. Cys328 (cysteine persulfide intermediate) is an active-site residue. Cys328 lines the [2Fe-2S] cluster pocket.

The protein belongs to the class-V pyridoxal-phosphate-dependent aminotransferase family. NifS/IscS subfamily. In terms of assembly, homodimer. Forms a heterotetramer with IscU, interacts with other sulfur acceptors. Pyridoxal 5'-phosphate is required as a cofactor.

It localises to the cytoplasm. The enzyme catalyses (sulfur carrier)-H + L-cysteine = (sulfur carrier)-SH + L-alanine. Its pathway is cofactor biosynthesis; iron-sulfur cluster biosynthesis. Its function is as follows. Master enzyme that delivers sulfur to a number of partners involved in Fe-S cluster assembly, tRNA modification or cofactor biosynthesis. Catalyzes the removal of elemental sulfur atoms from cysteine to produce alanine. Functions as a sulfur delivery protein for Fe-S cluster synthesis onto IscU, an Fe-S scaffold assembly protein, as well as other S acceptor proteins. This is Cysteine desulfurase IscS from Vibrio vulnificus (strain CMCP6).